Reading from the N-terminus, the 393-residue chain is Glutamyl-tRNA reductase (393 aa).

Residues 47-50 (TCGR), Ser-98, 103-105 (ETD), and Gln-109 each bind substrate. Catalysis depends on Cys-48, which acts as the Nucleophile. 177 to 182 (GAGAVG) contacts NADP(+).

Belongs to the glutamyl-tRNA reductase family. Homodimer.

It catalyses the reaction (S)-4-amino-5-oxopentanoate + tRNA(Glu) + NADP(+) = L-glutamyl-tRNA(Glu) + NADPH + H(+). Its pathway is porphyrin-containing compound metabolism; protoporphyrin-IX biosynthesis; 5-aminolevulinate from L-glutamyl-tRNA(Glu): step 1/2. In terms of biological role, catalyzes the NADPH-dependent reduction of glutamyl-tRNA(Glu) to glutamate 1-semialdehyde (GSA). This Pyrobaculum islandicum (strain DSM 4184 / JCM 9189 / GEO3) protein is Glutamyl-tRNA reductase.